The sequence spans 389 residues: S-adenosylmethionine synthase 3 (389 aa).

Glutamate 9 is a Mg(2+) binding site. Histidine 15 serves as a coordination point for ATP. Residue glutamate 43 participates in K(+) binding. 2 residues coordinate L-methionine: glutamate 56 and glutamine 99. ATP-binding positions include 167–169 (DGK), 235–238 (SGRF), aspartate 246, 252–253 (RK), alanine 269, lysine 273, and lysine 277. Aspartate 246 is an L-methionine binding site. Lysine 277 lines the L-methionine pocket.

Belongs to the AdoMet synthase family. In terms of assembly, homotetramer. Mn(2+) serves as cofactor. Mg(2+) is required as a cofactor. The cofactor is Co(2+). It depends on K(+) as a cofactor.

It localises to the cytoplasm. It carries out the reaction L-methionine + ATP + H2O = S-adenosyl-L-methionine + phosphate + diphosphate. It participates in amino-acid biosynthesis; S-adenosyl-L-methionine biosynthesis; S-adenosyl-L-methionine from L-methionine: step 1/1. Catalyzes the formation of S-adenosylmethionine from methionine and ATP. The reaction comprises two steps that are both catalyzed by the same enzyme: formation of S-adenosylmethionine (AdoMet) and triphosphate, and subsequent hydrolysis of the triphosphate. In Vitis vinifera (Grape), this protein is S-adenosylmethionine synthase 3 (METK3).